The chain runs to 130 residues: Protein ApaG (130 aa).

Residues Lys3–Arg127 form the ApaG domain.

This Methylobacterium sp. (strain 4-46) protein is Protein ApaG.